A 353-amino-acid polypeptide reads, in one-letter code: Tsukushi (353 aa).

An N-terminal signal peptide occupies residues 1–17 (MLCTLFLLLLALGIVQT). Positions 18 to 59 (TRPCFPGCQCEEETFGLFDSFSLIRVDCSSLGPHIVPVPIPL) constitute an LRRNT domain. LRR repeat units follow at residues 60-80 (DTAHLDLSSNRLETVNESVLG), 86-107 (TLAGLDLSHNLLTSITPTAFSR), 110-131 (YLESLDLSHNGLAALPAEVFTS), 133-154 (PLSDINLSHNRLREVSISAFTT), 160-180 (ALHVDLSHNLIHRLLPYPARA), 186-207 (TIQSLNLSWNRLRAVPDLRDLP), 208-228 (LRYLSLDGNPLATINPGAFMG), 231-253 (GLTHLSLASLQGILQLPPHGFRE), 256-277 (GLQVLDLSGNPKLKWAGAEVFS), and 281-302 (LLQELDLSGSSLVPLPETLLHH). Asn-75 carries an N-linked (GlcNAc...) asparagine glycan. The N-linked (GlcNAc...) asparagine glycan is linked to Asn-138. N-linked (GlcNAc...) asparagine glycosylation occurs at Asn-191.

As to quaternary structure, interacts with FZD4 (via FZ domain); competes with WNT2B for binding to FZD4, inhibiting Wnt signaling and repressing peripheral eye development. Interacts with TGFB1; the interaction contributes to regulation of the hair cycle. Interacts with netrin. Interacts with CCN2. In terms of tissue distribution, expressed at high levels in the liver, small intestine and placenta. Not or barely detectable in other tissues, including whole pancreas, adipose tissues, skeletal muscle, kidney, spleen, brain, lung and testis.

It localises to the secreted. In terms of biological role, contributes to various developmental events and other processes such as wound healing and cholesterol homeostasis through its interactions with multiple signaling pathways. Wnt signaling inhibitor which competes with WNT2B for binding to Wnt receptor FZD4 and represses WNT2B-dependent development of the peripheral eye. Plays a role in regulating the hair cycle by controlling TGFB1 signaling. Required for the development of the anterior commissure in the brain by inhibiting neurite outgrowth. Essential for terminal differentiation of hippocampal neural stem cells. Plays a role in regulating bone elongation and bone mass by modulating growth plate chondrocyte function and overall body size. Required for development of the inner ear through its involvement in stereocilia formation in inner hair cells. Facilitates wound healing by inhibiting secretion of TGFB1 from macrophages which prevents myofibroblast differentiation, maintaining inflammatory cell quiescence. Plays a role in cholesterol homeostasis by reducing circulating high-density lipoprotein cholesterol, lowering cholesterol efflux capacity and decreasing cholesterol-to-bile acid conversion in the liver. In one study, shown to negatively regulate sympathetic innervation in brown fat, leading to reduced energy expenditure. In another study, shown not to affect brown fat thermogenic capacity, body weight gain or glucose homeostasis. The protein is Tsukushi (Tsku) of Rattus norvegicus (Rat).